The chain runs to 564 residues: Carbamoyl phosphate synthase large chain, N-terminal section (564 aa).

Residues 1–399 form a carboxyphosphate synthetic domain region; sequence MPETPNKVLI…ALQKAIRSLE (399 aa). R127, R167, G173, G174, E206, V208, E213, G239, V240, H241, Q282, and E296 together coordinate ATP. Residues 131 to 325 enclose the ATP-grasp domain; it reads RAFMKKIGEP…IARIAAKIAI (195 aa). The Mg(2+) site is built by Q282, E296, and N298. 3 residues coordinate Mn(2+): Q282, E296, and N298. Residues 400–560 form an oligomerization domain region; it reads IGEPGLGPSP…YSTYEEECEA (161 aa).

Belongs to the CarB family. Composed of two chains; the small (or glutamine) chain promotes the hydrolysis of glutamine to ammonia, which is used by the large (or ammonia) chain to synthesize carbamoyl phosphate. Tetramer of heterodimers (alpha,beta)4. Requires Mg(2+) as cofactor. Mn(2+) serves as cofactor.

It catalyses the reaction hydrogencarbonate + L-glutamine + 2 ATP + H2O = carbamoyl phosphate + L-glutamate + 2 ADP + phosphate + 2 H(+). The enzyme catalyses hydrogencarbonate + NH4(+) + 2 ATP = carbamoyl phosphate + 2 ADP + phosphate + 2 H(+). It functions in the pathway amino-acid biosynthesis; L-arginine biosynthesis; carbamoyl phosphate from bicarbonate: step 1/1. The protein operates within pyrimidine metabolism; UMP biosynthesis via de novo pathway; (S)-dihydroorotate from bicarbonate: step 1/3. Large subunit of the glutamine-dependent carbamoyl phosphate synthetase (CPSase). CPSase catalyzes the formation of carbamoyl phosphate from the ammonia moiety of glutamine, carbonate, and phosphate donated by ATP, constituting the first step of 2 biosynthetic pathways, one leading to arginine and/or urea and the other to pyrimidine nucleotides. The large subunit (synthetase) binds the substrates ammonia (free or transferred from glutamine from the small subunit), hydrogencarbonate and ATP and carries out an ATP-coupled ligase reaction, activating hydrogencarbonate by forming carboxy phosphate which reacts with ammonia to form carbamoyl phosphate. This chain is Carbamoyl phosphate synthase large chain, N-terminal section (carB1), found in Methanopyrus kandleri (strain AV19 / DSM 6324 / JCM 9639 / NBRC 100938).